A 341-amino-acid chain; its full sequence is Mediator of RNA polymerase II transcription subunit 18 (341 aa).

Residues lysine 139–glutamine 216 are disordered. Over residues glutamate 163–glutamate 211 the composition is skewed to basic and acidic residues.

The protein belongs to the Mediator complex subunit 18 family. As to quaternary structure, component of the Mediator complex.

The protein resides in the nucleus. Component of the Mediator complex, a coactivator involved in the regulated transcription of nearly all RNA polymerase II-dependent genes. Mediator functions as a bridge to convey information from gene-specific regulatory proteins to the basal RNA polymerase II transcription machinery. Mediator is recruited to promoters by direct interactions with regulatory proteins and serves as a scaffold for the assembly of a functional preinitiation complex with RNA polymerase II and the general transcription factors. The sequence is that of Mediator of RNA polymerase II transcription subunit 18 (SRB5) from Debaryomyces hansenii (strain ATCC 36239 / CBS 767 / BCRC 21394 / JCM 1990 / NBRC 0083 / IGC 2968) (Yeast).